The sequence spans 31 residues: Cytochrome b6-f complex subunit 6 (31 aa).

The chain crosses the membrane as a helical span at residues 4–24 (ITSYFGFLLAALTITSVLFIG).

This sequence belongs to the PetL family. The 4 large subunits of the cytochrome b6-f complex are cytochrome b6, subunit IV (17 kDa polypeptide, PetD), cytochrome f and the Rieske protein, while the 4 small subunits are PetG, PetL, PetM and PetN. The complex functions as a dimer.

Its subcellular location is the plastid. It is found in the chloroplast thylakoid membrane. Its function is as follows. Component of the cytochrome b6-f complex, which mediates electron transfer between photosystem II (PSII) and photosystem I (PSI), cyclic electron flow around PSI, and state transitions. PetL is important for photoautotrophic growth as well as for electron transfer efficiency and stability of the cytochrome b6-f complex. This Arabidopsis thaliana (Mouse-ear cress) protein is Cytochrome b6-f complex subunit 6.